The following is a 60-amino-acid chain: Rubredoxin 4 (60 aa).

Residues 4–55 (YKLYQCAQCGFEYDEAVGWPEDGIEPGTRWDDIPEDWSCPDCGAAKSDFFMV) enclose the Rubredoxin-like domain. Cysteine 9, cysteine 12, cysteine 42, and cysteine 45 together coordinate Fe cation.

Belongs to the rubredoxin family. Requires Fe(3+) as cofactor.

Its function is as follows. Involved in the hydrocarbon hydroxylating system, which transfers electrons from NADH to rubredoxin reductase and then through rubredoxin to alkane 1 monooxygenase. In Rhodococcus sp. (strain Q15), this protein is Rubredoxin 4 (rubA4).